A 752-amino-acid chain; its full sequence is Cation-transporting P-type ATPase B (752 aa).

The 64-residue stretch at arginine 15 to alanine 78 folds into the HMA domain. Positions 26 and 29 each coordinate a metal cation. Transmembrane regions (helical) follow at residues leucine 105–valine 125, glycine 132–phenylalanine 152, methionine 167–phenylalanine 187, alanine 201–leucine 221, isoleucine 361–leucine 381, and alanine 390–threonine 410. Aspartate 446 serves as the catalytic 4-aspartylphosphate intermediate. A helical transmembrane segment spans residues alanine 714–phenylalanine 734.

Belongs to the cation transport ATPase (P-type) (TC 3.A.3) family. Type IB subfamily.

Its subcellular location is the cell membrane. The catalysed reaction is ATP + H2O = ADP + phosphate + H(+). This is Cation-transporting P-type ATPase B (ctpB) from Mycobacterium bovis (strain ATCC BAA-935 / AF2122/97).